A 210-amino-acid polypeptide reads, in one-letter code: 2-Cys peroxiredoxin BAS1, chloroplastic (210 aa).

The transit peptide at 1 to 10 (DARARSFVAR) directs the protein to the chloroplast. The region spanning 18-177 (PLVGNKAPDF…TLRTLQALQY (160 aa)) is the Thioredoxin domain. Cys-64 serves as the catalytic Cysteine sulfenic acid (-SOH) intermediate.

It belongs to the peroxiredoxin family. AhpC/Prx1 subfamily. In terms of assembly, homodimer; disulfide-linked, upon oxidation. In terms of tissue distribution, expressed in leaf blade, sheath, basiplast, stem and green spike. Maximal expression in young developing shoots segments where cell division and elongation take place. Not expressed in roots.

It localises to the plastid. The protein resides in the chloroplast. The enzyme catalyses a hydroperoxide + [thioredoxin]-dithiol = an alcohol + [thioredoxin]-disulfide + H2O. Thiol-specific peroxidase that catalyzes the reduction of hydrogen peroxide and organic hydroperoxides to water and alcohols, respectively. Plays a role in cell protection against oxidative stress by detoxifying peroxides. May be an antioxidant enzyme particularly in the developing shoot and photosynthesizing leaf. This Hordeum vulgare (Barley) protein is 2-Cys peroxiredoxin BAS1, chloroplastic (BAS1).